A 295-amino-acid polypeptide reads, in one-letter code: MAITAQMVKELREKTGAGMMDCKKALTETNGDMEKAIDFLREKGIAKAAKKADRIAAEGLTFIETNGNDALILELNSETDFVAKNEGFQTLIKELAAHLLTNKPANVEEAMAQTMENGKKVEEHINEAIAKIGEKLTLRRFEIVSKTDADAFGAYLHMGGRIGVLTVLEGSTDEAAAKDVAMHIAAVNPKYIDRDAVTAEEVEHERQVLTQQALNEGKPEKIVAKMVEGRLGKFFEEICLLDQAFVKNPDMKVRQFVESKGGTLKGFVRYAVGEGIEKREDNFAEEVMNQVKGSN.

The interval 79 to 82 is involved in Mg(2+) ion dislocation from EF-Tu; the sequence is TDFV.

It belongs to the EF-Ts family.

It is found in the cytoplasm. Associates with the EF-Tu.GDP complex and induces the exchange of GDP to GTP. It remains bound to the aminoacyl-tRNA.EF-Tu.GTP complex up to the GTP hydrolysis stage on the ribosome. This is Elongation factor Ts from Bacillus cereus (strain B4264).